The sequence spans 510 residues: MLTVDSQHCFSFILLCFFSLLCYSLLFKKLKDSHVGRDLLQSPPSLPIIGHLHHLLSSLAHKSLQQLSSKYGPLLHLSIFNFPVVLVSSASVAYEIFKAHDLNISSRDNPPINESLLVGSSVFVGAPYGDYWKFMKKLLVTKLLGPQALERSRSIRADELERFYRSLLDKAMKKESVEIGKEATKLSINSICRMSMGRSFSEESGEAERVRGLVTELDGLTKKVLLVNILRWPLEKLRISLFKKEIMYVSNSFDELLERIIVEREKKPNEHQGTYLMDVLLEAYEDEKAEHKITRNHIKSLFVELLLGGTDTSAQTIQWTMAELINNRNVLKRLREEIDSVVGETRLIQEKDLPKLPYLQSVVKEGLRLHPPLPLMVRTFQRSCEMKGFYIAEKTTLVVNAYAVMRDPTTWEDPDEFKPERFLRQEEERRALKHIAFGSGRRGCPGSNLATIFIGTAIGTMVQCFDLSIKGDKVKMDEVGGLNLTMAHPLECILVPRTQPFISNQQIPSL.

A helical transmembrane segment spans residues 7–27 (QHCFSFILLCFFSLLCYSLLF).

The protein belongs to the cytochrome P450 family. Heme is required as a cofactor.

The protein localises to the membrane. In Arabidopsis thaliana (Mouse-ear cress), this protein is Cytochrome P450 705A20 (CYP705A20).